The chain runs to 109 residues: Large ribosomal subunit protein uL24 (109 aa).

Belongs to the universal ribosomal protein uL24 family. In terms of assembly, part of the 50S ribosomal subunit.

Functionally, one of two assembly initiator proteins, it binds directly to the 5'-end of the 23S rRNA, where it nucleates assembly of the 50S subunit. One of the proteins that surrounds the polypeptide exit tunnel on the outside of the subunit. This chain is Large ribosomal subunit protein uL24, found in Syntrophotalea carbinolica (strain DSM 2380 / NBRC 103641 / GraBd1) (Pelobacter carbinolicus).